Consider the following 466-residue polypeptide: Fumarate hydratase class II (466 aa).

Substrate-binding positions include 100-102, Arg-128, 131-134, 141-143, and Thr-189; these read SGT, HPND, and STN. His-190 functions as the Proton donor/acceptor in the catalytic mechanism. Residue Ser-320 is part of the active site. Substrate is bound by residues Ser-321 and 326 to 328; that span reads KVN.

This sequence belongs to the class-II fumarase/aspartase family. Fumarase subfamily. Homotetramer.

It is found in the cytoplasm. It catalyses the reaction (S)-malate = fumarate + H2O. It functions in the pathway carbohydrate metabolism; tricarboxylic acid cycle; (S)-malate from fumarate: step 1/1. Functionally, involved in the TCA cycle. Catalyzes the stereospecific interconversion of fumarate to L-malate. This chain is Fumarate hydratase class II, found in Prochlorococcus marinus (strain MIT 9313).